Reading from the N-terminus, the 700-residue chain is uncharacterized protein (700 aa).

[4Fe-4S] cluster is bound by residues Cys307, Cys310, Cys314, and Cys558.

The protein belongs to the AOR/FOR family. [4Fe-4S] cluster is required as a cofactor. It depends on Mo-molybdopterin as a cofactor. Tungstopterin serves as cofactor.

This is an uncharacterized protein from Escherichia coli (strain K12).